The chain runs to 487 residues: Beta-barrel assembly-enhancing protease (487 aa).

The first 27 residues, 1–27, serve as a signal peptide directing secretion; sequence MFRQLKKNLVATLIAAMTIGQVAPAFA. Histidine 136 is a Zn(2+) binding site. The active site involves glutamate 137. Histidine 140 and glutamate 201 together coordinate Zn(2+). Aspartate 205 acts as the Proton donor in catalysis. TPR repeat units follow at residues 309 to 342, 344 to 376, 377 to 409, and 427 to 460; these read RAAQ…EPGN, WYLD…RTNP, VLQL…NKDD, and DQEL…VKLG.

It belongs to the peptidase M48 family. BepA subfamily. It depends on Zn(2+) as a cofactor.

Its subcellular location is the periplasm. Functions both as a chaperone and a metalloprotease. Maintains the integrity of the outer membrane by promoting either the assembly or the elimination of outer membrane proteins, depending on their folding state. The chain is Beta-barrel assembly-enhancing protease from Escherichia coli O157:H7.